Here is a 265-residue protein sequence, read N- to C-terminus: 5'-nucleotidase SurE (265 aa).

The a divalent metal cation site is built by Asp-8, Asp-9, Ser-40, and Asn-98.

It belongs to the SurE nucleotidase family. It depends on a divalent metal cation as a cofactor.

It is found in the cytoplasm. It catalyses the reaction a ribonucleoside 5'-phosphate + H2O = a ribonucleoside + phosphate. Its function is as follows. Nucleotidase that shows phosphatase activity on nucleoside 5'-monophosphates. The chain is 5'-nucleotidase SurE from Trichormus variabilis (strain ATCC 29413 / PCC 7937) (Anabaena variabilis).